The sequence spans 474 residues: Synaptotagmin-17 (474 aa).

Positions 60–117 are disordered; it reads WLMASRSNDKDGDSVHTASDVPLTPRTNSPDGRRSSSDTSKSTYSLTRRISSLDSRRP. A compositionally biased stretch (low complexity) spans 96 to 117; it reads SDTSKSTYSLTRRISSLDSRRP. 2 positions are modified to phosphoserine: Ser-118 and Ser-119. C2 domains lie at 184 to 310 and 321 to 455; these read QLGM…HWWK and ELGE…EQWH.

This sequence belongs to the synaptotagmin family. In terms of tissue distribution, expressed in brain and kidney.

The protein localises to the membrane. Its function is as follows. Plays a role in dendrite formation by melanocytes. This is Synaptotagmin-17 (Syt17) from Rattus norvegicus (Rat).